Consider the following 326-residue polypeptide: DNA-directed RNA polymerase subunit alpha (326 aa).

Residues methionine 1–glutamate 231 are alpha N-terminal domain (alpha-NTD). Residues isoleucine 245–glycine 326 are alpha C-terminal domain (alpha-CTD).

It belongs to the RNA polymerase alpha chain family. In terms of assembly, homodimer. The RNAP catalytic core consists of 2 alpha, 1 beta, 1 beta' and 1 omega subunit. When a sigma factor is associated with the core the holoenzyme is formed, which can initiate transcription.

It catalyses the reaction RNA(n) + a ribonucleoside 5'-triphosphate = RNA(n+1) + diphosphate. Its function is as follows. DNA-dependent RNA polymerase catalyzes the transcription of DNA into RNA using the four ribonucleoside triphosphates as substrates. The protein is DNA-directed RNA polymerase subunit alpha of Aromatoleum aromaticum (strain DSM 19018 / LMG 30748 / EbN1) (Azoarcus sp. (strain EbN1)).